We begin with the raw amino-acid sequence, 332 residues long: Fructose-1,6-bisphosphatase class 1 (332 aa).

Mg(2+) is bound by residues Glu-89, Asp-110, Leu-112, and Asp-113. Residues 113 to 116 (DGSS), Asn-206, Tyr-239, 257 to 259 (YLY), and Lys-269 each bind substrate. Glu-275 contributes to the Mg(2+) binding site.

The protein belongs to the FBPase class 1 family. Homotetramer. It depends on Mg(2+) as a cofactor.

The protein localises to the cytoplasm. The catalysed reaction is beta-D-fructose 1,6-bisphosphate + H2O = beta-D-fructose 6-phosphate + phosphate. The protein operates within carbohydrate biosynthesis; gluconeogenesis. The sequence is that of Fructose-1,6-bisphosphatase class 1 from Klebsiella pneumoniae subsp. pneumoniae (strain ATCC 700721 / MGH 78578).